Here is a 316-residue protein sequence, read N- to C-terminus: Phosphoribosylaminoimidazole-succinocarboxamide synthase (316 aa).

The protein belongs to the SAICAR synthetase family.

The enzyme catalyses 5-amino-1-(5-phospho-D-ribosyl)imidazole-4-carboxylate + L-aspartate + ATP = (2S)-2-[5-amino-1-(5-phospho-beta-D-ribosyl)imidazole-4-carboxamido]succinate + ADP + phosphate + 2 H(+). It participates in purine metabolism; IMP biosynthesis via de novo pathway; 5-amino-1-(5-phospho-D-ribosyl)imidazole-4-carboxamide from 5-amino-1-(5-phospho-D-ribosyl)imidazole-4-carboxylate: step 1/2. The protein is Phosphoribosylaminoimidazole-succinocarboxamide synthase of Flavobacterium psychrophilum (strain ATCC 49511 / DSM 21280 / CIP 103535 / JIP02/86).